Reading from the N-terminus, the 479-residue chain is D-hydantoinase/dihydropyrimidinase (479 aa).

H59, H61, and K150 together coordinate Zn(2+). Position 150 is an N6-carboxylysine (K150). Y155 contributes to the substrate binding site. H183 and H239 together coordinate Zn(2+). Residue S289 participates in substrate binding. Zn(2+) is bound at residue D316. N337 contacts substrate.

Belongs to the metallo-dependent hydrolases superfamily. Hydantoinase/dihydropyrimidinase family. Homotetramer. Zn(2+) is required as a cofactor. Post-translationally, carboxylation allows a single lysine to coordinate two zinc ions.

It catalyses the reaction 5,6-dihydrouracil + H2O = 3-(carbamoylamino)propanoate + H(+). Its function is as follows. Catalyzes the hydrolysis of dihydropyrimidines and of the structurally related DL-5-mono-substituted hydantoins, to produce N-carbamoyl-D-amino acids. This Pseudomonas aeruginosa (strain ATCC 15692 / DSM 22644 / CIP 104116 / JCM 14847 / LMG 12228 / 1C / PRS 101 / PAO1) protein is D-hydantoinase/dihydropyrimidinase (dht).